We begin with the raw amino-acid sequence, 829 residues long: Venom phosphodiesterase CdcPDE (829 aa).

SMB domains lie at 8 to 51 (PQVS…VLPT) and 52 to 96 (QSWS…GETS). 16 disulfide bridges follow: Cys-12–Cys-16, Cys-12–Cys-29, Cys-16–Cys-47, Cys-27–Cys-29, Cys-27–Cys-40, Cys-33–Cys-39, Cys-40–Cys-47, Cys-56–Cys-61, Cys-56–Cys-73, Cys-61–Cys-91, Cys-71–Cys-73, Cys-71–Cys-84, Cys-77–Cys-83, Cys-84–Cys-91, Cys-102–Cys-148, and Cys-110–Cys-322. An N-linked (GlcNAc...) asparagine glycan is attached at Asn-17. A Cell attachment site motif is present at residues 36 to 38 (RQA). Asp-125 and Thr-163 together coordinate a divalent metal cation. The AMP-threonine intermediate role is filled by Thr-163. 2 N-linked (GlcNAc...) asparagine glycosylation sites follow: Asn-194 and Asn-237. Lys-249 lines the AMP pocket. 4 residues coordinate a divalent metal cation: Asp-283, His-287, Asp-330, and His-331. His-287 contacts AMP. 6 disulfide bridges follow: Cys-338-Cys-435, Cys-386-Cys-771, Cys-519-Cys-577, Cys-532-Cys-632, Cys-534-Cys-617, and Cys-740-Cys-750. N-linked (GlcNAc...) asparagine glycosylation is present at Asn-383. His-440 lines the a divalent metal cation pocket. 2 N-linked (GlcNAc...) asparagine glycosylation sites follow: Asn-572 and Asn-652.

This sequence belongs to the nucleotide pyrophosphatase/phosphodiesterase family. Monomer. It depends on a divalent metal cation as a cofactor. In terms of processing, N-glycosylated. Glycosylation counts for an increased mass of ~9%. Post-translationally, contains 16 disulfide bonds. In terms of tissue distribution, expressed by venom gland.

Its subcellular location is the secreted. It catalyses the reaction ADP + H2O = AMP + phosphate + H(+). Functionally, hydrolyzes ADP with high activity. Shows weak or no activity on 5'-AMP, 5'-GMP, 3'-AMP, ATP, cAMP, and cGMP. Is devoid of monophosphatase and proteinase activities. Inhibits ADP-induced platelet aggregation and is cytotoxic to human keratinocytes. Kinetic parameters indicated a higher affinity for the substrate bis(p-nitrophenyl) phosphate compared to others snake venom PDEs. Is recognized by the crotalid antivenom produced by the Instituto Butantan. In Crotalus durissus collilineatus (Brazilian rattlesnake), this protein is Venom phosphodiesterase CdcPDE.